The chain runs to 506 residues: ATP synthase subunit alpha (506 aa).

169–176 (GDRQTGKT) is an ATP binding site.

It belongs to the ATPase alpha/beta chains family. F-type ATPases have 2 components, CF(1) - the catalytic core - and CF(0) - the membrane proton channel. CF(1) has five subunits: alpha(3), beta(3), gamma(1), delta(1), epsilon(1). CF(0) has three main subunits: a(1), b(2) and c(9-12). The alpha and beta chains form an alternating ring which encloses part of the gamma chain. CF(1) is attached to CF(0) by a central stalk formed by the gamma and epsilon chains, while a peripheral stalk is formed by the delta and b chains.

It is found in the cell membrane. It carries out the reaction ATP + H2O + 4 H(+)(in) = ADP + phosphate + 5 H(+)(out). In terms of biological role, produces ATP from ADP in the presence of a proton gradient across the membrane. The alpha chain is a regulatory subunit. The sequence is that of ATP synthase subunit alpha from Lawsonia intracellularis (strain PHE/MN1-00).